We begin with the raw amino-acid sequence, 208 residues long: High frequency lysogenization protein HflD homolog (208 aa).

This sequence belongs to the HflD family.

Its subcellular location is the cytoplasm. It localises to the cell inner membrane. The polypeptide is High frequency lysogenization protein HflD homolog (Photorhabdus laumondii subsp. laumondii (strain DSM 15139 / CIP 105565 / TT01) (Photorhabdus luminescens subsp. laumondii)).